The following is a 191-amino-acid chain: Somatotropin (191 aa).

Residue H20 coordinates Zn(2+). C53 and C164 are oxidised to a cystine. E173 contributes to the Zn(2+) binding site. The cysteines at positions 181 and 189 are disulfide-linked.

It belongs to the somatotropin/prolactin family.

It is found in the secreted. Functionally, growth hormone plays an important role in growth control and is involved in the regulation of several anabolic processes. Implicated as an osmoregulatory substance important for seawater adaptation. The polypeptide is Somatotropin (GH) (Chelonia mydas (Green sea-turtle)).